The chain runs to 420 residues: UDP-N-acetylglucosamine 1-carboxyvinyltransferase (420 aa).

Phosphoenolpyruvate is bound at residue 22 to 23 (KN). Residue Arg93 coordinates UDP-N-acetyl-alpha-D-glucosamine. Cys117 (proton donor) is an active-site residue. At Cys117 the chain carries 2-(S-cysteinyl)pyruvic acid O-phosphothioketal. Positions 307 and 329 each coordinate UDP-N-acetyl-alpha-D-glucosamine.

This sequence belongs to the EPSP synthase family. MurA subfamily.

It localises to the cytoplasm. It catalyses the reaction phosphoenolpyruvate + UDP-N-acetyl-alpha-D-glucosamine = UDP-N-acetyl-3-O-(1-carboxyvinyl)-alpha-D-glucosamine + phosphate. It participates in cell wall biogenesis; peptidoglycan biosynthesis. Its function is as follows. Cell wall formation. Adds enolpyruvyl to UDP-N-acetylglucosamine. The polypeptide is UDP-N-acetylglucosamine 1-carboxyvinyltransferase (Shewanella pealeana (strain ATCC 700345 / ANG-SQ1)).